We begin with the raw amino-acid sequence, 549 residues long: Glucose-6-phosphate isomerase (549 aa).

The Proton donor role is filled by Glu-355. Active-site residues include His-386 and Lys-514.

Belongs to the GPI family.

It localises to the cytoplasm. The catalysed reaction is alpha-D-glucose 6-phosphate = beta-D-fructose 6-phosphate. Its pathway is carbohydrate biosynthesis; gluconeogenesis. It functions in the pathway carbohydrate degradation; glycolysis; D-glyceraldehyde 3-phosphate and glycerone phosphate from D-glucose: step 2/4. Its function is as follows. Catalyzes the reversible isomerization of glucose-6-phosphate to fructose-6-phosphate. This chain is Glucose-6-phosphate isomerase, found in Edwardsiella ictaluri (strain 93-146).